A 320-amino-acid chain; its full sequence is MRSAQVYRWQIPMDAGVVLRDRRLKTRDGLYVCLRDGEREGWGEISPLPGFSQETWEEAQTALLTWVNDWLQGNEGLPEMPSVAFGASCALAELTGILPEAADYRAAPLCTGDPDDLVLRLADMPGEKIAKVKVGLYEAVRDGMVVNLLLEAIPDLHLRLDANRAWTPLKAQQFAKYVNPDYRARIAFLEEPCKTRDDSRAFARETGIAIAWDESLREADFTFEAEEGVRAVVIKPTLTGSLDKVREQVAAAHALGLTAVISSSIESSLGLTQLARIAAWLTPGTLPGLDTLHLMQAQQIRPWPGSALPCLKREELERLL.

Lysine 133 (proton donor) is an active-site residue. Residues aspartate 161, glutamate 190, and aspartate 213 each contribute to the Mg(2+) site. Lysine 235 (proton acceptor) is an active-site residue.

It belongs to the mandelate racemase/muconate lactonizing enzyme family. MenC type 1 subfamily. Requires a divalent metal cation as cofactor.

The catalysed reaction is (1R,6R)-6-hydroxy-2-succinyl-cyclohexa-2,4-diene-1-carboxylate = 2-succinylbenzoate + H2O. It functions in the pathway quinol/quinone metabolism; 1,4-dihydroxy-2-naphthoate biosynthesis; 1,4-dihydroxy-2-naphthoate from chorismate: step 4/7. Its pathway is quinol/quinone metabolism; menaquinone biosynthesis. In terms of biological role, converts 2-succinyl-6-hydroxy-2,4-cyclohexadiene-1-carboxylate (SHCHC) to 2-succinylbenzoate (OSB). This is o-succinylbenzoate synthase from Salmonella newport (strain SL254).